Consider the following 82-residue polypeptide: DNA-directed RNA polymerase subunit omega (82 aa).

It belongs to the RNA polymerase subunit omega family. In terms of assembly, the RNAP catalytic core consists of 2 alpha, 1 beta, 1 beta' and 1 omega subunit. When a sigma factor is associated with the core the holoenzyme is formed, which can initiate transcription.

The catalysed reaction is RNA(n) + a ribonucleoside 5'-triphosphate = RNA(n+1) + diphosphate. Functionally, promotes RNA polymerase assembly. Latches the N- and C-terminal regions of the beta' subunit thereby facilitating its interaction with the beta and alpha subunits. This is DNA-directed RNA polymerase subunit omega from Lacticaseibacillus casei (strain BL23) (Lactobacillus casei).